We begin with the raw amino-acid sequence, 83 residues long: U25-theraphotoxin-Cg1a (83 aa).

A signal peptide spans M1–A23. A propeptide spanning residues Q24–R48 is cleaved from the precursor. Intrachain disulfides connect C50/C66, C57/C71, and C65/C81.

Belongs to the neurotoxin 07 (Beta/delta-agtx) family. 03 (aga-4) subfamily. JZTX sub-subfamily. Expressed by the venom gland.

It localises to the secreted. Inhibits TTX-sensitive sodium currents in rat dorsal root ganglion (DRG) neurons. In Chilobrachys guangxiensis (Chinese earth tiger tarantula), this protein is U25-theraphotoxin-Cg1a.